We begin with the raw amino-acid sequence, 393 residues long: MYKAFLIKYGEIGVKGKNRFIFEDALVRQIKFSLKDVEGEFDVRRADGRIYVNALADYDYDEVIESLTRVFGIVGICPVVQIEDNGFDDLANQVINYLDKAYKNKNLTFKVNARRTRKNYPMNSMEINMELGGRILDAFPEMKVDVHKPEVLLQVEIRGDVINIYSIEVPGPGGMPIGTAGKAMLLLSGGIDSPVAGYMVAKRGVQIEATYFHAPPYTSERAKQKVIDLAKIVSKYSGPITLNVVNFTDIQMAIYEKCPHDELTIIMRRYMMKIAEDLGKSSGCQGLVTGESIGQVASQTMASLYCTNEVCTMPVFRPVIGFDKQEIIDISEKIGSYETSIQPFEDCCTIFVAKHPVTKPNLNIIKQHETNLDGVIEELYKTAIETTEKIVIE.

One can recognise a THUMP domain in the interval Asp61–Glu168. ATP is bound by residues Leu186–Leu187, Tyr211–Phe212, Arg268, Gly290, and Gln299.

This sequence belongs to the ThiI family.

The protein resides in the cytoplasm. It carries out the reaction [ThiI sulfur-carrier protein]-S-sulfanyl-L-cysteine + a uridine in tRNA + 2 reduced [2Fe-2S]-[ferredoxin] + ATP + H(+) = [ThiI sulfur-carrier protein]-L-cysteine + a 4-thiouridine in tRNA + 2 oxidized [2Fe-2S]-[ferredoxin] + AMP + diphosphate. It catalyses the reaction [ThiS sulfur-carrier protein]-C-terminal Gly-Gly-AMP + S-sulfanyl-L-cysteinyl-[cysteine desulfurase] + AH2 = [ThiS sulfur-carrier protein]-C-terminal-Gly-aminoethanethioate + L-cysteinyl-[cysteine desulfurase] + A + AMP + 2 H(+). Its pathway is cofactor biosynthesis; thiamine diphosphate biosynthesis. In terms of biological role, catalyzes the ATP-dependent transfer of a sulfur to tRNA to produce 4-thiouridine in position 8 of tRNAs, which functions as a near-UV photosensor. Also catalyzes the transfer of sulfur to the sulfur carrier protein ThiS, forming ThiS-thiocarboxylate. This is a step in the synthesis of thiazole, in the thiamine biosynthesis pathway. The sulfur is donated as persulfide by IscS. The polypeptide is Probable tRNA sulfurtransferase (Lachnospira eligens (strain ATCC 27750 / DSM 3376 / VPI C15-48 / C15-B4) (Eubacterium eligens)).